We begin with the raw amino-acid sequence, 682 residues long: Heat shock 70 kDa protein, mitochondrial (682 aa).

A mitochondrion-targeting transit peptide spans 1 to 57 (MATAALLRSLRRREFATSSISAYRTLASNTKPSWCPSLVGAKWAGLARPFSSKPAGN). The segment at 649–682 (GEHMAGGSSGGASGGGGAQGGDQPPEAEYEEVKK) is disordered. The segment covering 655-668 (GSSGGASGGGGAQG) has biased composition (gly residues). A compositionally biased stretch (acidic residues) spans 673-682 (PEAEYEEVKK).

The protein belongs to the heat shock protein 70 family.

The protein localises to the mitochondrion. This chain is Heat shock 70 kDa protein, mitochondrial (HSP68), found in Solanum tuberosum (Potato).